We begin with the raw amino-acid sequence, 461 residues long: Argininosuccinate lyase (461 aa).

It belongs to the lyase 1 family. Argininosuccinate lyase subfamily.

It is found in the cytoplasm. It carries out the reaction 2-(N(omega)-L-arginino)succinate = fumarate + L-arginine. It functions in the pathway amino-acid biosynthesis; L-arginine biosynthesis; L-arginine from L-ornithine and carbamoyl phosphate: step 3/3. The chain is Argininosuccinate lyase from Syntrophotalea carbinolica (strain DSM 2380 / NBRC 103641 / GraBd1) (Pelobacter carbinolicus).